We begin with the raw amino-acid sequence, 66 residues long: DNA gyrase inhibitor YacG (66 aa).

Positions 9, 12, 28, and 32 each coordinate Zn(2+). Residues 45–66 (HKIAGSEGSEDELYSGDLEPRH) are disordered.

It belongs to the DNA gyrase inhibitor YacG family. As to quaternary structure, interacts with GyrB. It depends on Zn(2+) as a cofactor.

In terms of biological role, inhibits all the catalytic activities of DNA gyrase by preventing its interaction with DNA. Acts by binding directly to the C-terminal domain of GyrB, which probably disrupts DNA binding by the gyrase. The chain is DNA gyrase inhibitor YacG from Pseudomonas putida (strain ATCC 700007 / DSM 6899 / JCM 31910 / BCRC 17059 / LMG 24140 / F1).